A 316-amino-acid chain; its full sequence is Pantothenate kinase (316 aa).

Position 95–102 (95–102 (GSVAVGKS)) interacts with ATP.

Belongs to the prokaryotic pantothenate kinase family.

The protein resides in the cytoplasm. It catalyses the reaction (R)-pantothenate + ATP = (R)-4'-phosphopantothenate + ADP + H(+). It participates in cofactor biosynthesis; coenzyme A biosynthesis; CoA from (R)-pantothenate: step 1/5. In Shewanella sp. (strain MR-7), this protein is Pantothenate kinase.